We begin with the raw amino-acid sequence, 703 residues long: Meiotic coiled-coil protein 2 (703 aa).

Polar residues-rich tracts occupy residues M1–E19 and T245–L258. 3 disordered regions span residues M1–N29, T245–L265, and A284–S309. A PUM-HD domain is found at N331–N686. Pumilio repeat units lie at residues N361 to D396, S397 to S432, A433 to D468, E469 to N504, A509 to E544, E545 to D580, A581 to K616, and R625 to T660.

This Schizosaccharomyces pombe (strain 972 / ATCC 24843) (Fission yeast) protein is Meiotic coiled-coil protein 2 (mcp2).